A 205-amino-acid chain; its full sequence is NAD(P)H-quinone oxidoreductase subunit 6, organellar chromatophore (205 aa).

5 helical membrane passes run L9 to L29, I32 to L52, A61 to V81, I90 to I110, and L145 to L165.

It belongs to the complex I subunit 6 family. In terms of assembly, NDH is composed of at least 16 different subunits, 5 of which are encoded in the nucleus.

The protein localises to the plastid. It is found in the organellar chromatophore thylakoid membrane. It catalyses the reaction a plastoquinone + NADH + (n+1) H(+)(in) = a plastoquinol + NAD(+) + n H(+)(out). The catalysed reaction is a plastoquinone + NADPH + (n+1) H(+)(in) = a plastoquinol + NADP(+) + n H(+)(out). Functionally, NDH shuttles electrons from NAD(P)H:plastoquinone, via FMN and iron-sulfur (Fe-S) centers, to quinones in the photosynthetic chain and possibly in a chloroplast respiratory chain. The immediate electron acceptor for the enzyme in this species is believed to be plastoquinone. Couples the redox reaction to proton translocation, and thus conserves the redox energy in a proton gradient. The sequence is that of NAD(P)H-quinone oxidoreductase subunit 6, organellar chromatophore (ndhG) from Paulinella chromatophora.